The chain runs to 120 residues: Large ribosomal subunit protein bL20 (120 aa).

It belongs to the bacterial ribosomal protein bL20 family.

Its function is as follows. Binds directly to 23S ribosomal RNA and is necessary for the in vitro assembly process of the 50S ribosomal subunit. It is not involved in the protein synthesizing functions of that subunit. This Ureaplasma urealyticum serovar 10 (strain ATCC 33699 / Western) protein is Large ribosomal subunit protein bL20.